The following is a 239-amino-acid chain: Geranylgeranylglyceryl phosphate synthase (239 aa).

Residues Asp18 and Ser45 each contribute to the Mg(2+) site. Sn-glycerol 1-phosphate contacts are provided by residues Tyr166–Gly172, Gly197–Gly198, and Gly219–Thr220.

Belongs to the GGGP/HepGP synthase family. Group II subfamily. The cofactor is Mg(2+).

It is found in the cytoplasm. The catalysed reaction is sn-glycerol 1-phosphate + (2E,6E,10E)-geranylgeranyl diphosphate = sn-3-O-(geranylgeranyl)glycerol 1-phosphate + diphosphate. The protein operates within membrane lipid metabolism; glycerophospholipid metabolism. In terms of biological role, prenyltransferase that catalyzes the transfer of the geranylgeranyl moiety of geranylgeranyl diphosphate (GGPP) to the C3 hydroxyl of sn-glycerol-1-phosphate (G1P). This reaction is the first ether-bond-formation step in the biosynthesis of archaeal membrane lipids. In Pyrobaculum islandicum (strain DSM 4184 / JCM 9189 / GEO3), this protein is Geranylgeranylglyceryl phosphate synthase.